Reading from the N-terminus, the 242-residue chain is Pyr4-family terpene cyclase mfmH (242 aa).

A run of 4 helical transmembrane segments spans residues 25 to 45 (VQDG…ILYI), 55 to 75 (GMPL…GAAI), 80 to 100 (AQVV…YTTW), and 116 to 136 (NLGW…WAFL). N170 is a glycosylation site (N-linked (GlcNAc...) asparagine). The next 2 membrane-spanning stretches (helical) occupy residues 175–195 (SWGI…IFVW) and 211–231 (VTIF…FVYA).

This sequence belongs to the paxB family.

It is found in the membrane. It functions in the pathway secondary metabolite biosynthesis; terpenoid biosynthesis. Terpene cyclase; part of the gene cluster that mediates the biosynthesis of the phthalide-terpenoid hybrid 11'-O-desmethylfendlerol. Within the pathway, mfmH catalyzes the last step and cyclizes the prenyl unit of 5-O-farnesylcyclopolic acid into a drimane-like structure to yield 11'-O-desmethylfendlerol. The biosynthesis of 11'-O-desmethylfendlerol begins with the NR-PKS mfmB that forms 3,5-dimethylorsellinic acid (DMOA), which is then transformed into the phthalide 5,7-dihydroxy-4-(hydroxymethyl)-6-methylphthalide by the cytochrome P450 monooxygenase mfmA and the hydrolase mfmC. Subsequently, the methyltransferase mfmE catalyzes 7-O-methylation to yield 5-hydroxy-4-(hydroxymethyl)-7-methoxy-6-methylphthalide, which undergoes C-3 hydroxylation by the cytochrome P450 monooxygenase mfmF. The resultant cyclopolic acid (2,5-dihydroxy-4-(hydroxymethyl)-7-methoxy-6-methylphthalide) is then farnesylated by the DMATS-type prenyltransferase mfmD to afford 5-O-farnesylcyclopolic acid. Finally, the Pyr4-family terpene cyclase mfmH cyclizes the farnesyl moiety of 5-O-farnesylcyclopolic acid into a drimane-like structure, thus completing the biosynthesis of 11'-O-desmethylfendlerol. The protein is Pyr4-family terpene cyclase mfmH of Annulohypoxylon moriforme (Filamentous fungus).